The following is a 404-amino-acid chain: Spore germination protein YndF (404 aa).

Positions 1 to 24 (MKSKLKRQLPAMVIVCLLMICVTG) are cleaved as a signal peptide. The N-palmitoyl cysteine moiety is linked to residue Cys25. Cys25 carries the S-diacylglycerol cysteine lipid modification.

Belongs to the GerABKC lipoprotein family.

It is found in the cell membrane. Functionally, may be involved in spore germination. This Bacillus subtilis (strain 168) protein is Spore germination protein YndF (yndF).